Reading from the N-terminus, the 257-residue chain is Zinc import ATP-binding protein ZnuC (257 aa).

An ABC transporter domain is found at 6–221 (IRLEQVGVSF…PAFVELFGQN (216 aa)). 38–45 (GPNGAGKT) lines the ATP pocket.

Belongs to the ABC transporter superfamily. Zinc importer (TC 3.A.1.15.5) family. As to quaternary structure, the complex is composed of two ATP-binding proteins (ZnuC), two transmembrane proteins (ZnuB) and a solute-binding protein (ZnuA).

It is found in the cell inner membrane. The enzyme catalyses Zn(2+)(out) + ATP(in) + H2O(in) = Zn(2+)(in) + ADP(in) + phosphate(in) + H(+)(in). Part of the ABC transporter complex ZnuABC involved in zinc import. Responsible for energy coupling to the transport system. This chain is Zinc import ATP-binding protein ZnuC, found in Pseudomonas entomophila (strain L48).